Here is a 576-residue protein sequence, read N- to C-terminus: Keratin, type II cytoskeletal 5 (576 aa).

The head stretch occupies residues M1–E163. Residues S5, S8, S16, and S21 each carry the phosphoserine modification. T24 carries the post-translational modification Phosphothreonine; by CDK1. S26, S36, S46, S60, S67, S71, S74, and S78 each carry phosphoserine. The residue at position 147 (T147) is a Phosphothreonine; by CDK1. Residue T162 is modified to Phosphothreonine; by AURKB. The interval E164–L199 is coil 1A. In terms of domain architecture, IF rod spans E164–L477. The interval Q200–Y218 is linker 1. The interval I219–Q311 is coil 1B. The linker 12 stretch occupies residues T312 to I334. Positions I335 to E473 are coil 2. A tail region spans residues E474 to S576. R527 is modified (omega-N-methylarginine). A compositionally biased stretch (gly residues) spans G540–S557. The disordered stretch occupies residues G540 to S576. Positions S558–S576 are enriched in low complexity.

The protein belongs to the intermediate filament family. As to quaternary structure, heterodimer of a type I and a type II keratin. Heterodimer with type I keratin KRT25 leading to the formation of keratin intermediate filament (KIF) network. Forms a heterodimer (via 2B domains) with KRT14 (via 2B domains). Interacts with TCHP. Interacts with EPPK1. Interacts with AMELX. Interacts with PKP1 (via N-terminus) and PKP2. Post-translationally, phosphorylated by CDK1, AURKB and Rho-kinase, phosphorylation is regulated by the cell cycle. Thr-24 phosphorylation, mediated by CDK1, peaks during prometaphase or metaphase cells with phosphorylated filamentous structures evident throughout the cytoplasm during early mitosis. CDK1 phosphorylates Thr-24 in mitotic cells at the site of injury. O-glycosylated. As to expression, expressed in the epidermis (at protein level) and testis (within pachytene spermatocytes).

Its subcellular location is the cytoplasm. Functionally, required for the formation of keratin intermediate filaments in the basal epidermis and maintenance of the skin barrier in response to mechanical stress. Regulates the recruitment of Langerhans cells to the epidermis, potentially by modulation of the abundance of macrophage chemotactic cytokines, macrophage inflammatory cytokines and CTNND1 localization in keratinocytes. In Rattus norvegicus (Rat), this protein is Keratin, type II cytoskeletal 5.